The sequence spans 574 residues: Proline--tRNA ligase (574 aa).

The protein belongs to the class-II aminoacyl-tRNA synthetase family. ProS type 1 subfamily. As to quaternary structure, homodimer.

The protein localises to the cytoplasm. It catalyses the reaction tRNA(Pro) + L-proline + ATP = L-prolyl-tRNA(Pro) + AMP + diphosphate. Functionally, catalyzes the attachment of proline to tRNA(Pro) in a two-step reaction: proline is first activated by ATP to form Pro-AMP and then transferred to the acceptor end of tRNA(Pro). As ProRS can inadvertently accommodate and process non-cognate amino acids such as alanine and cysteine, to avoid such errors it has two additional distinct editing activities against alanine. One activity is designated as 'pretransfer' editing and involves the tRNA(Pro)-independent hydrolysis of activated Ala-AMP. The other activity is designated 'posttransfer' editing and involves deacylation of mischarged Ala-tRNA(Pro). The misacylated Cys-tRNA(Pro) is not edited by ProRS. The sequence is that of Proline--tRNA ligase from Teredinibacter turnerae (strain ATCC 39867 / T7901).